The chain runs to 379 residues: Presenilin-associated rhomboid-like protein, mitochondrial (379 aa).

The N-terminal 52 residues, 1 to 52 (MAWRGWAQRGWGCGQAWGASVGGRSCEELTAVLTPPQLLGRRFNFFIQQKCG), are a transit peptide targeting the mitochondrion. Residues 53 to 101 (FRKAPRKVEPRRSDPGTSGEAYKRSALIPPVEETVFYPSPYPIRSLIKP) are Mitochondrial matrix-facing. Ser-65 carries the post-translational modification Phosphoserine. At Thr-69 the chain carries Phosphothreonine. A Phosphoserine modification is found at Ser-70. A helical transmembrane segment spans residues 102–121 (LFFTVGFTGCAFGSAAIWQY). Residues 122–167 (ESLKSRVQSYFDGIKADWLDSIRPQKEGDFRKEINKWWNNLSDGQR) lie on the Mitochondrial intermembrane side of the membrane. Residues 168 to 187 (TVTGIIAANVLVFCLWRVPS) traverse the membrane as a helical segment. The Mitochondrial matrix segment spans residues 188–207 (LQRTMIRYFTSNPASKVLCS). The helical transmembrane segment at 208–230 (PMLLSTFSHFSLFHMAANMYVLW) threads the bilayer. Residues 231 to 244 (SFSSSIVNILGQEQ) lie on the Mitochondrial intermembrane side of the membrane. A helical transmembrane segment spans residues 245–262 (FMAVYLSAGVISNFVSYV). The Mitochondrial matrix segment spans residues 263 to 272 (GKVATGRYGP). A helical membrane pass occupies residues 273 to 289 (SLGASGAIMTVLAAVCT). The active-site Nucleophile is the Ser-277. The Mitochondrial intermembrane portion of the chain corresponds to 290–295 (KIPEGR). The chain crosses the membrane as a helical span at residues 296–318 (LAIIFLPMFTFTAGNALKAIIAM). The Mitochondrial matrix segment spans residues 319–332 (DTAGMILGWKFFDH). Residues 333 to 354 (AAHLGGALFGIWYVTYGHELIW) form a helical membrane-spanning segment. His-335 is an active-site residue. The Mitochondrial intermembrane portion of the chain corresponds to 355–379 (KNREPLVKIWHEIRTNGPKKGGGSK).

Belongs to the peptidase S54 family. Interacts with PSEN1 and PSEN2. Binds OPA1. Post-translationally, P-beta is proteolytically processed (beta-cleavage) in a PARL-dependent manner. The cleavage is inhibited when residues Ser-65, Thr-69 and Ser-70 are all phosphorylated.

It is found in the mitochondrion inner membrane. The protein localises to the nucleus. It catalyses the reaction Cleaves type-1 transmembrane domains using a catalytic dyad composed of serine and histidine that are contributed by different transmembrane domains.. Required for the control of apoptosis during postnatal growth. Essential for proteolytic processing of an antiapoptotic form of OPA1 which prevents the release of mitochondrial cytochrome c in response to intrinsic apoptotic signals. Required for the maturation of PINK1 into its 52kDa mature form after its cleavage by mitochondrial-processing peptidase (MPP). Promotes cleavage of serine/threonine-protein phosphatase PGAM5 in damaged mitochondria in response to loss of mitochondrial membrane potential. Mediates differential cleavage of PINK1 and PGAM5 depending on the health status of mitochondria, disassociating from PINK1 and associating with PGAM5 in response to mitochondrial membrane potential loss. Required for processing of CLPB into a form with higher protein disaggregase activity by removing an autoinhibitory N-terminal peptide. Promotes processing of DIABLO/SMAC in the mitochondrion which is required for DIABLO apoptotic activity. Also required for cleavage of STARD7 and TTC19. Promotes changes in mitochondria morphology regulated by phosphorylation of P-beta domain. This chain is Presenilin-associated rhomboid-like protein, mitochondrial (PARL), found in Homo sapiens (Human).